The sequence spans 515 residues: 1-pyrroline-5-carboxylate dehydrogenase (515 aa).

Residues E286 and C320 contribute to the active site.

It belongs to the aldehyde dehydrogenase family. RocA subfamily.

The enzyme catalyses L-glutamate 5-semialdehyde + NAD(+) + H2O = L-glutamate + NADH + 2 H(+). Its pathway is amino-acid degradation; L-proline degradation into L-glutamate; L-glutamate from L-proline: step 2/2. The sequence is that of 1-pyrroline-5-carboxylate dehydrogenase from Bacillus cereus (strain ATCC 10987 / NRS 248).